Consider the following 254-residue polypeptide: Probable transcriptional regulatory protein MAE_13580 (254 aa).

It belongs to the TACO1 family.

The protein resides in the cytoplasm. This Microcystis aeruginosa (strain NIES-843 / IAM M-2473) protein is Probable transcriptional regulatory protein MAE_13580.